The primary structure comprises 440 residues: Glycerophosphocholine cholinephosphodiesterase ENPP6 (440 aa).

An N-terminal signal peptide occupies residues 1–22; the sequence is MAVKLGTLLLALALGLAQPASA. Asp32, Ser71, and Asn92 together coordinate substrate. Zn(2+) is bound by residues Asp32 and Ser71. Catalysis depends on Ser71, which acts as the Nucleophile. A Phosphoserine modification is found at Ser71. N-linked (GlcNAc...) asparagine glycans are attached at residues Asn100 and Asn118. The cysteines at positions 142 and 154 are disulfide-linked. Residue Asp193 participates in substrate binding. 4 residues coordinate Zn(2+): Asp193, His197, Asp240, and His241. A substrate-binding site is contributed by His241. Residue Asn341 is glycosylated (N-linked (GlcNAc...) asparagine). Substrate is bound at residue His354. A Zn(2+)-binding site is contributed by His354. N-linked (GlcNAc...) asparagine glycosylation is present at Asn404. The GPI-anchor amidated alanine moiety is linked to residue Ala418. Residues 419-440 constitute a propeptide, removed in mature form; the sequence is GTTPPVQPSHCALALILLFLLA.

This sequence belongs to the nucleotide pyrophosphatase/phosphodiesterase family. As to quaternary structure, homodimer; disulfide-linked. Homotetramer. Requires Zn(2+) as cofactor.

It is found in the cell membrane. The enzyme catalyses sn-glycerol 3-phosphocholine + H2O = phosphocholine + glycerol + H(+). It catalyses the reaction a 1-acyl-sn-glycero-3-phosphocholine + H2O = a 1-acyl-sn-glycerol + phosphocholine + H(+). The catalysed reaction is a 1-O-alkyl-sn-glycero-3-phosphocholine + H2O = a 1-O-alkyl-sn-glycerol + phosphocholine + H(+). It carries out the reaction 1-dodecanoyl-sn-glycero-3-phosphocholine + H2O = 1-dodecanoyl-sn-glycerol + phosphocholine + H(+). The enzyme catalyses 1-hexadecanoyl-sn-glycero-3-phosphocholine + H2O = 1-hexadecanoyl-sn-glycerol + phosphocholine + H(+). It catalyses the reaction 1-(5Z,8Z,11Z,14Z-eicosatetraenoyl)-sn-glycero-3-phosphocholine + H2O = 1-(5Z,8Z,11Z,14Z-eicosatetraenoyl)-sn-glycerol + phosphocholine + H(+). The catalysed reaction is 1-tetradecanoyl-sn-glycero-3-phosphocholine + H2O = 1-tetradecanoyl-sn-glycerol + phosphocholine + H(+). It carries out the reaction sphing-4-enine-phosphocholine + H2O = sphing-4-enine + phosphocholine + H(+). The enzyme catalyses 1-(9Z-octadecenoyl)-sn-glycero-3-phosphocholine + H2O = 1-(9Z-octadecenoyl)-sn-glycerol + phosphocholine + H(+). It catalyses the reaction 1-(9Z,12Z)-octadecadienoyl-sn-glycero-3-phosphocholine + H2O = 1-(9Z,12Z-octadecadienoyl)-sn-glycerol + phosphocholine + H(+). The catalysed reaction is glycero-2-phosphocholine + H2O = phosphocholine + glycerol + H(+). With respect to regulation, inhibited by EDTA and EGTA in vitro. Choline-specific glycerophosphodiesterase that hydrolyzes glycerophosphocholine (GPC) and lysophosphatidylcholine (LPC) and contributes to supplying choline to the cells. Has a preference for LPC with short (12:0 and 14:0) or polyunsaturated (18:2 and 20:4) fatty acids. In vitro, hydrolyzes only choline-containing lysophospholipids, such as sphingosylphosphorylcholine (SPC), platelet-activating factor (PAF) and lysoPAF, but not other lysophospholipids. The polypeptide is Glycerophosphocholine cholinephosphodiesterase ENPP6 (Pongo abelii (Sumatran orangutan)).